The sequence spans 132 residues: Small ribosomal subunit protein uS8c (132 aa).

Belongs to the universal ribosomal protein uS8 family. Part of the 30S ribosomal subunit.

It is found in the plastid. The protein resides in the chloroplast. One of the primary rRNA binding proteins, it binds directly to 16S rRNA central domain where it helps coordinate assembly of the platform of the 30S subunit. This is Small ribosomal subunit protein uS8c (rps8) from Phaeodactylum tricornutum (strain CCAP 1055/1).